The following is a 243-amino-acid chain: Adenosylcobinamide-GDP ribazoletransferase (243 aa).

Helical transmembrane passes span 31–51 (LLFYPLVGAVFGTLLLGFNTL), 55–75 (APLMLHAALVLTAWVLLSGGL), 109–129 (IAVVTLVLVLLLKFAAILALI), 133–153 (ASVWLLLAPVIGRAAMLGLFL), and 188–208 (VLLAGWSGVAVLLVCAVCFFW).

This sequence belongs to the CobS family. Requires Mg(2+) as cofactor.

It is found in the cell inner membrane. It catalyses the reaction alpha-ribazole + adenosylcob(III)inamide-GDP = adenosylcob(III)alamin + GMP + H(+). It carries out the reaction alpha-ribazole 5'-phosphate + adenosylcob(III)inamide-GDP = adenosylcob(III)alamin 5'-phosphate + GMP + H(+). The protein operates within cofactor biosynthesis; adenosylcobalamin biosynthesis; adenosylcobalamin from cob(II)yrinate a,c-diamide: step 7/7. Its function is as follows. Joins adenosylcobinamide-GDP and alpha-ribazole to generate adenosylcobalamin (Ado-cobalamin). Also synthesizes adenosylcobalamin 5'-phosphate from adenosylcobinamide-GDP and alpha-ribazole 5'-phosphate. This chain is Adenosylcobinamide-GDP ribazoletransferase, found in Pseudomonas syringae pv. syringae (strain B728a).